The following is a 459-amino-acid chain: N-chimaerin (459 aa).

An N-acetylalanine modification is found at Ala2. The SH2 domain occupies 49–135 (EYHGMISREE…IETKAAEYIA (87 aa)). Thr192 is modified (phosphothreonine). The segment at 205-255 (VHNFKVHTFRGPHWCEYCANFMWGLIAQGVKCADCGLNVHKQCSKMVPNDC) adopts a Phorbol-ester/DAG-type zinc-finger fold. Residues 268–459 (CDLTTLVKAH…LLIKNEDILF (192 aa)) enclose the Rho-GAP domain. Thr340 is modified (phosphothreonine).

Interacts with EPHA4; effector of EPHA4 in axon guidance linking EPHA4 activation to RAC1 regulation. May also interact with EPHB1 and EPHB2. In terms of processing, phosphorylated. Phosphorylation is EPHA4 kinase activity-dependent.

GTPase-activating protein for p21-rac and a phorbol ester receptor. May play an important role in neuronal signal-transduction mechanisms. Involved in the assembly of neuronal locomotor circuits as a direct effector of EPHA4 in axon guidance. This Mus musculus (Mouse) protein is N-chimaerin (Chn1).